The chain runs to 442 residues: L-seryl-tRNA(Sec) selenium transferase (442 aa).

N6-(pyridoxal phosphate)lysine is present on lysine 284.

It belongs to the SelA family. The cofactor is pyridoxal 5'-phosphate.

It is found in the cytoplasm. It carries out the reaction L-seryl-tRNA(Sec) + selenophosphate + H(+) = L-selenocysteinyl-tRNA(Sec) + phosphate. It participates in aminoacyl-tRNA biosynthesis; selenocysteinyl-tRNA(Sec) biosynthesis; selenocysteinyl-tRNA(Sec) from L-seryl-tRNA(Sec) (bacterial route): step 1/1. In terms of biological role, converts seryl-tRNA(Sec) to selenocysteinyl-tRNA(Sec) required for selenoprotein biosynthesis. The polypeptide is L-seryl-tRNA(Sec) selenium transferase (Campylobacter fetus subsp. fetus (strain 82-40)).